The primary structure comprises 426 residues: Molybdopterin molybdenumtransferase 1 (426 aa).

Belongs to the MoeA family. Mg(2+) serves as cofactor.

It catalyses the reaction adenylyl-molybdopterin + molybdate = Mo-molybdopterin + AMP + H(+). The protein operates within cofactor biosynthesis; molybdopterin biosynthesis. Catalyzes the insertion of molybdate into adenylated molybdopterin with the concomitant release of AMP. This is Molybdopterin molybdenumtransferase 1 (moeA1) from Mycobacterium tuberculosis (strain ATCC 25618 / H37Rv).